A 548-amino-acid chain; its full sequence is Probable thiamine biosynthetic bifunctional enzyme, chloroplastic (548 aa).

The span at 1-10 (MAAAPQQSVH) shows a compositional bias: polar residues. Residues 1-40 (MAAAPQQSVHPSLPSSTSTLRLLISSSPRRPPPPPPRARR) are disordered. A chloroplast-targeting transit peptide spans 1–47 (MAAAPQQSVHPSLPSSTSTLRLLISSSPRRPPPPPPRARRYNRLAAS). Residues 11–28 (PSLPSSTSTLRLLISSSP) are compositionally biased toward low complexity. Residues 372–376 (QLREK) and Asn404 contribute to the 4-amino-2-methyl-5-(diphosphooxymethyl)pyrimidine site. 2 residues coordinate Mg(2+): Asp405 and Asp424. Residue Ser443 participates in 4-amino-2-methyl-5-(diphosphooxymethyl)pyrimidine binding. 2-[(2R,5Z)-2-carboxy-4-methylthiazol-5(2H)-ylidene]ethyl phosphate is bound at residue 469-471 (TST). Lys472 lines the 4-amino-2-methyl-5-(diphosphooxymethyl)pyrimidine pocket. 2-[(2R,5Z)-2-carboxy-4-methylthiazol-5(2H)-ylidene]ethyl phosphate contacts are provided by residues Gly499 and 522–523 (VS).

The protein belongs to the thiamine-phosphate synthase family. The cofactor is Mg(2+).

It is found in the plastid. It localises to the chloroplast. It catalyses the reaction 2-[(2R,5Z)-2-carboxy-4-methylthiazol-5(2H)-ylidene]ethyl phosphate + 4-amino-2-methyl-5-(diphosphooxymethyl)pyrimidine + 2 H(+) = thiamine phosphate + CO2 + diphosphate. It carries out the reaction 2-(2-carboxy-4-methylthiazol-5-yl)ethyl phosphate + 4-amino-2-methyl-5-(diphosphooxymethyl)pyrimidine + 2 H(+) = thiamine phosphate + CO2 + diphosphate. The catalysed reaction is 4-methyl-5-(2-phosphooxyethyl)-thiazole + 4-amino-2-methyl-5-(diphosphooxymethyl)pyrimidine + H(+) = thiamine phosphate + diphosphate. The enzyme catalyses 4-amino-5-hydroxymethyl-2-methylpyrimidine + ATP = 4-amino-2-methyl-5-(phosphooxymethyl)pyrimidine + ADP + H(+). The protein operates within cofactor biosynthesis; thiamine diphosphate biosynthesis; thiamine phosphate from 4-amino-2-methyl-5-diphosphomethylpyrimidine and 4-methyl-5-(2-phosphoethyl)-thiazole: step 1/1. It functions in the pathway cofactor biosynthesis; thiamine diphosphate biosynthesis; 4-amino-2-methyl-5-diphosphomethylpyrimidine from 5-amino-1-(5-phospho-D-ribosyl)imidazole: step 2/3. Its function is as follows. Essential for thiamine biosynthesis. Bifunctional enzyme that catalyzes the phosphorylation of hydroxymethylpyrimidine phosphate (HMP-P) to HMP-PP and condenses 4-methyl-5-(beta-hydroxyethyl)thiazole monophosphate (THZ-P) and 2-methyl-4-amino-5-hydroxymethyl pyrimidine pyrophosphate (HMP-PP) to form thiamine monophosphate (TMP). The chain is Probable thiamine biosynthetic bifunctional enzyme, chloroplastic from Oryza sativa subsp. japonica (Rice).